Here is a 280-residue protein sequence, read N- to C-terminus: SPX domain-containing protein 2 (280 aa).

Residues 1 to 162 form the SPX domain; the sequence is MKFGKSLSSQ…GSMIRLPFVQ (162 aa). 2 disordered regions span residues 191 to 244 and 257 to 280; these read PTNE…KSTV and GSST…EPGR.

In terms of assembly, interacts (via SPX domain) with PHR2 (via C-terminus). Interacts with RLI1 in the nucleus to prevents its positive regulation of leaf inclination during phosphate (Pi) starvation. Predominantly expressed in roots, leaves and seeds. Localized in leaves lamina joints.

It localises to the nucleus. Inhibits PHR2 DNA-binding activity via a phosphate (Pi)-dependent protein interaction. Together with SPX1, plays a negative role in the regulation of leaf inclination by preventing RLI1 transcription factor activity in Pi depleted conditions. This Oryza sativa subsp. japonica (Rice) protein is SPX domain-containing protein 2.